The following is a 313-amino-acid chain: Putative phosphoribosylaminoimidazole-succinocarboxamide synthase 2 (313 aa).

This sequence belongs to the SAICAR synthetase family.

It carries out the reaction 5-amino-1-(5-phospho-D-ribosyl)imidazole-4-carboxylate + L-aspartate + ATP = (2S)-2-[5-amino-1-(5-phospho-beta-D-ribosyl)imidazole-4-carboxamido]succinate + ADP + phosphate + 2 H(+). Its pathway is purine metabolism; IMP biosynthesis via de novo pathway; 5-amino-1-(5-phospho-D-ribosyl)imidazole-4-carboxamide from 5-amino-1-(5-phospho-D-ribosyl)imidazole-4-carboxylate: step 1/2. This chain is Putative phosphoribosylaminoimidazole-succinocarboxamide synthase 2 (purC2), found in Mesorhizobium japonicum (strain LMG 29417 / CECT 9101 / MAFF 303099) (Mesorhizobium loti (strain MAFF 303099)).